The following is a 746-amino-acid chain: Protein Niban 2 (746 aa).

The N-myristoyl glycine moiety is linked to residue Gly2. One can recognise a PH domain in the interval 68–192; sequence RIVFSGNLFQ…WQAVLQDCIR (125 aa). A phosphoserine mark is found at Ser568, Ser574, Ser601, and Ser603. Residues 590–746 are disordered; sequence GEEYSNSGGG…EDSAGVQTEF (157 aa). Position 606 is a phosphothreonine (Thr606). Ser609, Ser624, Ser638, Ser641, Ser646, Ser665, Ser681, Ser692, and Ser696 each carry phosphoserine. Positions 671–693 are enriched in low complexity; it reads PLLNGAPAGESPQPKAAPEASSP. Residues 720-746 show a composition bias toward polar residues; sequence GEQVSSPSSHPALHTTTEDSAGVQTEF.

Belongs to the Niban family. Phosphorylated at Ser-641, Ser-646, Ser-692 and Ser-696 by the BRAF/MKK/ERK signaling cascade. In melanoma cells, the C-terminal phosphorylation may prevent targeting to the plasma membrane. In terms of processing, as apoptosis proceeds, degraded via an proteasome-independent pathway, probably by caspases.

It localises to the cytoplasm. The protein localises to the cytosol. The protein resides in the cell junction. It is found in the adherens junction. Its subcellular location is the membrane. Its function is as follows. May play a role in apoptosis suppression. May promote melanoma cell invasion in vitro. The chain is Protein Niban 2 from Homo sapiens (Human).